The following is a 303-amino-acid chain: Trans-aconitate 2-methyltransferase (303 aa).

Positions 271 to 303 (EGSGGSGGSGGSAGSAGCAGSGGSVGPAGEAGR) are disordered. Residues 272-303 (GSGGSGGSGGSAGSAGCAGSGGSVGPAGEAGR) show a composition bias toward gly residues.

It belongs to the methyltransferase superfamily. Tam family.

The protein resides in the cytoplasm. It catalyses the reaction trans-aconitate + S-adenosyl-L-methionine = (E)-3-(methoxycarbonyl)pent-2-enedioate + S-adenosyl-L-homocysteine. Catalyzes the S-adenosylmethionine monomethyl esterification of trans-aconitate. This Streptomyces coelicolor (strain ATCC BAA-471 / A3(2) / M145) protein is Trans-aconitate 2-methyltransferase.